The sequence spans 285 residues: Nurim (285 aa).

The Nuclear portion of the chain corresponds to M1–S16. Residues L17 to F44 traverse the membrane as a helical segment. Topologically, residues L45–Q74 are perinuclear space. The helical transmembrane segment at F75–M96 threads the bilayer. Topologically, residues A97–Q113 are nuclear. The helical transmembrane segment at R114 to R130 threads the bilayer. The Perinuclear space portion of the chain corresponds to F131–W149. A helical transmembrane segment spans residues S150–L180. Residues M181–L207 lie on the Nuclear side of the membrane. The helical transmembrane segment at Y208–V226 threads the bilayer. Topologically, residues P227 to D232 are perinuclear space. Residues R233 to L250 form a helical membrane-spanning segment. Residues D251 to N285 lie on the Nuclear side of the membrane.

This sequence belongs to the nurim family.

It is found in the nucleus inner membrane. In Xenopus laevis (African clawed frog), this protein is Nurim (nrm).